Reading from the N-terminus, the 206-residue chain is Pyridoxine/pyridoxamine 5'-phosphate oxidase (206 aa).

Residues 54-59, 69-70, Arg-75, Lys-76, and Gln-98 each bind FMN; these read RVVLLK and YT. Lys-59 provides a ligand contact to substrate. Residues Tyr-116, Arg-120, and Ser-124 each coordinate substrate. FMN is bound by residues 133–134 and Trp-178; that span reads QS. A substrate-binding site is contributed by 184–186; that stretch reads RLH. Arg-188 lines the FMN pocket.

The protein belongs to the pyridoxamine 5'-phosphate oxidase family. As to quaternary structure, homodimer. It depends on FMN as a cofactor.

The catalysed reaction is pyridoxamine 5'-phosphate + O2 + H2O = pyridoxal 5'-phosphate + H2O2 + NH4(+). It carries out the reaction pyridoxine 5'-phosphate + O2 = pyridoxal 5'-phosphate + H2O2. It participates in cofactor metabolism; pyridoxal 5'-phosphate salvage; pyridoxal 5'-phosphate from pyridoxamine 5'-phosphate: step 1/1. The protein operates within cofactor metabolism; pyridoxal 5'-phosphate salvage; pyridoxal 5'-phosphate from pyridoxine 5'-phosphate: step 1/1. Its function is as follows. Catalyzes the oxidation of either pyridoxine 5'-phosphate (PNP) or pyridoxamine 5'-phosphate (PMP) into pyridoxal 5'-phosphate (PLP). The protein is Pyridoxine/pyridoxamine 5'-phosphate oxidase of Anaplasma phagocytophilum (strain HZ).